We begin with the raw amino-acid sequence, 778 residues long: Protein SPT2 homolog (778 aa).

Disordered regions lie at residues 1–21, 50–625, and 639–685; these read MDFH…GIAK, KKDE…AKPK, and VPKS…DDDD. The segment at 1-665 is important for interaction with DNA; the sequence is MDFHSVLKMA…PGHRPAMRPP (665 aa). Residues 44–83 are a coiled coil; the sequence is VQAFLRKKDEESRRKETVEKRKKEDLLAKRKELKHDRKAR. Positions 50–78 are enriched in basic and acidic residues; sequence KKDEESRRKETVEKRKKEDLLAKRKELKH. A compositionally biased stretch (acidic residues) spans 114 to 135; that stretch reads EEDQNDNMAAEGEEYMTEEELY. The span at 153 to 167 shows a compositional bias: pro residues; the sequence is QKVPKPAPGKKPPTP. Residues 190 to 227 show a composition bias toward basic and acidic residues; the sequence is RPVKKEERLRTAEELKELEFLERKAQKADRKDPKRNEQ. Residues 193–221 are a coiled coil; the sequence is KKEERLRTAEELKELEFLERKAQKADRKD. Positions 242-269 are enriched in polar residues; the sequence is LKGTHSGNSKSSSTEQNGTIRKSSSDTG. Residues 270–286 show a composition bias toward basic and acidic residues; sequence SRTEKSGSVFHTKESKK. Over residues 312-335 the composition is skewed to low complexity; that stretch reads SSQPSAASNSAFGRPSGSARPSGS. Composition is skewed to gly residues over residues 336-357 and 365-384; these read SGPG…GGSA and GGSG…GKPI. Residues 385–394 show a composition bias toward low complexity; that stretch reads GGLHSSHGSG. Over residues 395 to 417 the composition is skewed to gly residues; it reads KPTGGTGSGSGKPTGASGSGSGK. Composition is skewed to low complexity over residues 418 to 493 and 506 to 559; these read PTGS…SGSA and GSGS…PSSS. A compositionally biased stretch (polar residues) spans 588–604; the sequence is VRPNSTSVPGSARSSLG. Residues 662–671 show a composition bias toward pro residues; sequence MRPPGPPLPP. The important for interaction with histones stretch occupies residues 666-778; the sequence is GPPLPPITSS…QLKAAKKMSR (113 aa). A coiled-coil region spans residues 735 to 778; sequence REQQKEEARSLRLGIQEDLEELQREEEELKRKAKQLKAAKKMSR.

It belongs to the SPT2 family. Interacts with histones. Interacts with a heterotetrameric complex formed by histone H3 and H4, especially when the histone tetramer is not bound to DNA.

The protein localises to the nucleus. The protein resides in the nucleolus. Histone chaperone that stabilizes pre-existing histone tetramers and regulates replication-independent histone exchange on chromatin. Required for normal chromatin refolding in the coding region of transcribed genes, and for the suppression of spurious transcription. Binds DNA and histones and promotes nucleosome assembly (in vitro). Facilitates formation of tetrameric histone complexes containing histone H3 and H4. Modulates RNA polymerase 1-mediated transcription. Binds DNA, with a preference for branched DNA species, such as Y-form DNA and Holliday junction DNA. This is Protein SPT2 homolog (spty2d1) from Xenopus tropicalis (Western clawed frog).